Reading from the N-terminus, the 227-residue chain is Holliday junction branch migration complex subunit RuvA (227 aa).

Positions 1–64 (MFESISGILT…EDALRLFGFS (64 aa)) are domain I. Residues 65 to 143 (NVQERTLFLS…LTDAASCAQS (79 aa)) are domain II. The flexible linker stretch occupies residues 144 to 158 (QTDDRAAHPSNLGCA). The tract at residues 159-227 (PHAREIEDLV…HPHAVAPAAE (69 aa)) is domain III.

Belongs to the RuvA family. Homotetramer. Forms an RuvA(8)-RuvB(12)-Holliday junction (HJ) complex. HJ DNA is sandwiched between 2 RuvA tetramers; dsDNA enters through RuvA and exits via RuvB. An RuvB hexamer assembles on each DNA strand where it exits the tetramer. Each RuvB hexamer is contacted by two RuvA subunits (via domain III) on 2 adjacent RuvB subunits; this complex drives branch migration. In the full resolvosome a probable DNA-RuvA(4)-RuvB(12)-RuvC(2) complex forms which resolves the HJ.

The protein resides in the cytoplasm. In terms of biological role, the RuvA-RuvB-RuvC complex processes Holliday junction (HJ) DNA during genetic recombination and DNA repair, while the RuvA-RuvB complex plays an important role in the rescue of blocked DNA replication forks via replication fork reversal (RFR). RuvA specifically binds to HJ cruciform DNA, conferring on it an open structure. The RuvB hexamer acts as an ATP-dependent pump, pulling dsDNA into and through the RuvAB complex. HJ branch migration allows RuvC to scan DNA until it finds its consensus sequence, where it cleaves and resolves the cruciform DNA. This is Holliday junction branch migration complex subunit RuvA from Treponema pallidum (strain Nichols).